The primary structure comprises 216 residues: Imidazole glycerol phosphate synthase subunit HisH (216 aa).

A Glutamine amidotransferase type-1 domain is found at 2 to 216 (RVAIIDYGSG…LIANFLKWKP (215 aa)). Catalysis depends on C88, which acts as the Nucleophile. Residues H196 and E198 contribute to the active site.

As to quaternary structure, heterodimer of HisH and HisF.

Its subcellular location is the cytoplasm. The catalysed reaction is 5-[(5-phospho-1-deoxy-D-ribulos-1-ylimino)methylamino]-1-(5-phospho-beta-D-ribosyl)imidazole-4-carboxamide + L-glutamine = D-erythro-1-(imidazol-4-yl)glycerol 3-phosphate + 5-amino-1-(5-phospho-beta-D-ribosyl)imidazole-4-carboxamide + L-glutamate + H(+). It catalyses the reaction L-glutamine + H2O = L-glutamate + NH4(+). It participates in amino-acid biosynthesis; L-histidine biosynthesis; L-histidine from 5-phospho-alpha-D-ribose 1-diphosphate: step 5/9. Its function is as follows. IGPS catalyzes the conversion of PRFAR and glutamine to IGP, AICAR and glutamate. The HisH subunit catalyzes the hydrolysis of glutamine to glutamate and ammonia as part of the synthesis of IGP and AICAR. The resulting ammonia molecule is channeled to the active site of HisF. This chain is Imidazole glycerol phosphate synthase subunit HisH, found in Brucella abortus biovar 1 (strain 9-941).